The following is a 1044-amino-acid chain: Isoleucine--tRNA ligase (1044 aa).

The short motif at 49 to 59 is the 'HIGH' region element; it reads PYCSGRIHLGT. The short motif at 591–595 is the 'KMSKS' region element; the sequence is KMSKS. Position 594 (Lys-594) interacts with ATP.

The protein belongs to the class-I aminoacyl-tRNA synthetase family. IleS type 2 subfamily. Monomer. Zn(2+) is required as a cofactor.

The protein localises to the cytoplasm. It carries out the reaction tRNA(Ile) + L-isoleucine + ATP = L-isoleucyl-tRNA(Ile) + AMP + diphosphate. Its function is as follows. Catalyzes the attachment of isoleucine to tRNA(Ile). As IleRS can inadvertently accommodate and process structurally similar amino acids such as valine, to avoid such errors it has two additional distinct tRNA(Ile)-dependent editing activities. One activity is designated as 'pretransfer' editing and involves the hydrolysis of activated Val-AMP. The other activity is designated 'posttransfer' editing and involves deacylation of mischarged Val-tRNA(Ile). This chain is Isoleucine--tRNA ligase, found in Methanothermobacter thermautotrophicus (strain ATCC 29096 / DSM 1053 / JCM 10044 / NBRC 100330 / Delta H) (Methanobacterium thermoautotrophicum).